Reading from the N-terminus, the 309-residue chain is DNA replication terminus site-binding protein (309 aa).

The protein belongs to the Tus family.

It localises to the cytoplasm. Trans-acting protein required for termination of DNA replication. Binds to DNA replication terminator sequences (terA to terF) to prevent the passage of replication forks. The termination efficiency will be affected by the affinity of this protein for the terminator sequence. In Yersinia enterocolitica serotype O:8 / biotype 1B (strain NCTC 13174 / 8081), this protein is DNA replication terminus site-binding protein.